The sequence spans 162 residues: Sorting nexin-3 (162 aa).

Residue Ala2 is modified to N-acetylalanine. The PX domain maps to 27 to 151; the sequence is NFLEIDVSNP…HMFLQDEIID (125 aa). Arg43 bears the Omega-N-methylarginine mark. A 1,2-diacyl-sn-glycero-3-phospho-(1D-myo-inositol-3-phosphate)-binding residues include Arg70, Ser72, Lys95, and Arg118. Position 72 is a phosphoserine (Ser72). Lys95 is covalently cross-linked (Glycyl lysine isopeptide (Lys-Gly) (interchain with G-Cter in SUMO2)). The interval 147 to 162 is binds predominantly to PtdIns(P5) and weaker to PtdIns(P3) abd PtdIns(P4); involved in neurite outgrowth regulation; sequence DEIIDKSYTPSKIRHA.

It belongs to the sorting nexin family. As to quaternary structure, interacts with VPS26A, VPS29 and VPS35; the interaction with VPS35 is direct. The association with the retromer CSC subcomplex subunits is proposed to represent a functional distinct retromer variant described as SNX3-retromer complex. Interacts with USP10 and SCNN1A. Interacts with TRFC. Interacts with SNX8; 2 molecules of SNX8 seems to associate with one molecule of SNX3. Interacts with PTPRU. Interacts with MON2 and DOP1B. Ubiquitinated, leading to its proteasomal degradation. Deubiquitinated by USP10.

The protein resides in the early endosome. It is found in the cytoplasmic vesicle. Its subcellular location is the phagosome. In terms of biological role, phosphoinositide-binding protein required for multivesicular body formation. Specifically binds phosphatidylinositol 3-phosphate (PtdIns(P3)). Can also bind phosphatidylinositol 4-phosphate (PtdIns(P4)), phosphatidylinositol 5-phosphate (PtdIns(P5)) and phosphatidylinositol 3,5-biphosphate (PtdIns(3,5)P2). Plays a role in protein transport between cellular compartments. Together with RAB7A facilitates endosome membrane association of the retromer cargo-selective subcomplex (CSC/VPS). May in part act as component of the SNX3-retromer complex which mediates the retrograde endosome-to-TGN transport of WLS distinct from the SNX-BAR retromer pathway. Promotes stability and cell surface expression of epithelial sodium channel (ENAC) subunits SCNN1A and SCNN1G. Not involved in EGFR degradation. Involved in the regulation of phagocytosis in dendritic cells possibly by regulating EEA1 recruitment to the nascent phagosomes. Involved in iron homeostasis through regulation of endocytic recycling of the transferrin receptor TFRC presumably by delivering the transferrin:transferrin receptor complex to recycling endosomes; the function may involve the CSC retromer subcomplex. In the case of Salmonella enterica infection plays arole in maturation of the Salmonella-containing vacuole (SCV) and promotes recruitment of LAMP1 to SCVs. The polypeptide is Sorting nexin-3 (Homo sapiens (Human)).